Consider the following 492-residue polypeptide: Homoserine O-acetyltransferase (492 aa).

The AB hydrolase-1 domain maps to 47–354 (NVILVCHALT…NYGHDAFLLE (308 aa)). Residue S152 is the Nucleophile of the active site. R221 contacts substrate. Residues D315 and H348 contribute to the active site. D349 serves as a coordination point for substrate. CBS domains are found at residues 375–432 (MKLD…FTTL) and 436–492 (LTKN…HRCT).

It belongs to the AB hydrolase superfamily. MetX family. As to quaternary structure, homodimer.

It is found in the cytoplasm. It catalyses the reaction L-homoserine + acetyl-CoA = O-acetyl-L-homoserine + CoA. It functions in the pathway amino-acid biosynthesis; L-methionine biosynthesis via de novo pathway; O-acetyl-L-homoserine from L-homoserine: step 1/1. In terms of biological role, transfers an acetyl group from acetyl-CoA to L-homoserine, forming acetyl-L-homoserine. This is Homoserine O-acetyltransferase from Methanosalsum zhilinae (strain DSM 4017 / NBRC 107636 / OCM 62 / WeN5) (Methanohalophilus zhilinae).